Here is a 253-residue protein sequence, read N- to C-terminus: MAGQDPRLRGEPLKHVLVIDDDVAMRHLIVEYLTIHAFKVTAVADSKQFNRVLCSETVDVVVVDLNLGREDGLEIVRSLATKSDVPIIIISGARLEEADKVIALELGATDFIAKPFGTREFLARIRVALRVRPSVARTKDRRSFSFADWTLNLRRRRLISEEGSEVKLTAGEFNLLVAFLEKPRDVLSREQLLIASRVREEEVYDRSIDVLILRLRRKLEGDPTTPQLIKTARGAGYFFDADVDVSYGGVMAA.

The 115-residue stretch at 15–129 folds into the Response regulatory domain; sequence HVLVIDDDVA…EFLARIRVAL (115 aa). A 4-aspartylphosphate modification is found at aspartate 64. The segment at residues 141–241 is a DNA-binding region (ompR/PhoB-type); it reads RRSFSFADWT…ARGAGYFFDA (101 aa).

Phosphorylated by wide host range (WHR) VirA protein.

The protein resides in the cytoplasm. Functionally, virG is required for the positive regulation of at least two vir loci encoded by the Ti plasmid of A.tumefaciens. This is Regulatory protein VirG (virG) from Agrobacterium fabrum (strain C58 / ATCC 33970) (Agrobacterium tumefaciens (strain C58)).